We begin with the raw amino-acid sequence, 338 residues long: Homoserine kinase (338 aa).

This sequence belongs to the GHMP kinase family. Homoserine kinase subfamily.

It carries out the reaction L-homoserine + ATP = O-phospho-L-homoserine + ADP + H(+). It functions in the pathway amino-acid biosynthesis; L-threonine biosynthesis; L-threonine from L-aspartate: step 4/5. Its function is as follows. Commits homoserine to the threonine biosynthesis pathway by catalyzing its O-phosphorylation. The polypeptide is Homoserine kinase (Schizosaccharomyces pombe (strain 972 / ATCC 24843) (Fission yeast)).